A 670-amino-acid chain; its full sequence is DNA ligase (670 aa).

Residues 32-36 (DSEYD), 81-82 (SL), and E114 each bind NAD(+). Catalysis depends on K116, which acts as the N6-AMP-lysine intermediate. Positions 137, 174, 291, and 315 each coordinate NAD(+). Residues C409, C412, C427, and C433 each coordinate Zn(2+). In terms of domain architecture, BRCT spans 592–670 (ASENLFKDKT…EEEFLAQITR (79 aa)).

It belongs to the NAD-dependent DNA ligase family. LigA subfamily. The cofactor is Mg(2+). Mn(2+) is required as a cofactor.

The catalysed reaction is NAD(+) + (deoxyribonucleotide)n-3'-hydroxyl + 5'-phospho-(deoxyribonucleotide)m = (deoxyribonucleotide)n+m + AMP + beta-nicotinamide D-nucleotide.. Functionally, DNA ligase that catalyzes the formation of phosphodiester linkages between 5'-phosphoryl and 3'-hydroxyl groups in double-stranded DNA using NAD as a coenzyme and as the energy source for the reaction. It is essential for DNA replication and repair of damaged DNA. The chain is DNA ligase from Haemophilus influenzae (strain 86-028NP).